We begin with the raw amino-acid sequence, 275 residues long: Probable CCR4-associated factor 1 homolog 7 (275 aa).

D40, E42, D167, and D236 together coordinate a divalent metal cation.

Belongs to the CAF1 family. As to quaternary structure, component of the CCR4-NOT complex, at least composed of CRR4 and CAF1 proteins. Requires a divalent metal cation as cofactor.

Its subcellular location is the nucleus. It localises to the cytoplasm. It carries out the reaction Exonucleolytic cleavage of poly(A) to 5'-AMP.. In terms of biological role, ubiquitous transcription factor required for a diverse set of processes. It is a component of the CCR4 complex involved in the control of gene expression. The sequence is that of Probable CCR4-associated factor 1 homolog 7 (CAF1-7) from Arabidopsis thaliana (Mouse-ear cress).